The chain runs to 626 residues: Division abnormally delayed protein (626 aa).

A signal peptide spans 1 to 26 (MAARSVRLAQLLLFTLLCGFVGLSAA). A compositionally biased stretch (basic residues) spans 41–52 (LHSATTHHRRRL). Positions 41-65 (LHSATTHHRRRLQRDSRAKDAVGGS) are disordered. The N-linked (GlcNAc...) asparagine; atypical glycan is linked to N97. N101, N150, and N187 each carry an N-linked (GlcNAc...) asparagine glycan. A disordered region spans residues 533–607 (NSIQATHDIQ…GKTSGSNPLE (75 aa)). O-linked (Xyl...) (heparan sulfate) serine glycosylation is found at S549, S569, S573, and S601. Residues 565 to 575 (GAHGSGDGSGD) are compositionally biased toward gly residues. G602 is lipidated: GPI-anchor amidated glycine. Positions 603 to 626 (SNPLEGTATWMLLTLVTMLFSSCS) are cleaved as a propeptide — removed in mature form.

It belongs to the glypican family. Interacts with nord; the interaction promotes dally degradation. Interacts with Magu. As part of the dally/ Magu complex, associates with fwe (isoforms ubi, LoseA and LoseB) and is unable to interact with fwe independently of Magu.

The protein resides in the cell membrane. In terms of biological role, cell surface proteoglycan that bears heparan sulfate. Functions as a coreceptor for growth factors and morphogens, such as the products of dpp, to regulate signaling and distribution of these ligands. Required for cell division patterning during postembryonic development of the nervous system. Plays a role in dpp/BMP signaling possibly by stabilizing dpp and thereby creating a morphological gradient during wing development. Might have a role in testis development. Functions with magu and fwe in a mechanism of scaling, which utilises apoptosis to ensure that the dpp patterning gradient remains proportional to the size of the growing wing. In this mechanism, fwe represses dally and Magu-dependent activity in expanding the gradient, and dally/Magu inhibits fwe-dependent apoptosis to keep cell death rate low. When the levels of these different proteins are optimally regulated the gradient correctly scales with organ growth but when this fails, fwe-mediated apoptosis is activated to trim the developing tissue to match the correct size of the gradient. The sequence is that of Division abnormally delayed protein (dally) from Drosophila melanogaster (Fruit fly).